We begin with the raw amino-acid sequence, 533 residues long: Adenylate kinase 7 (533 aa).

Positions 177–426 are adenylate kinase; that stretch reads PVKICILGPP…EPRNYGLTDE (250 aa). ATP is bound at residue 187–192; that stretch reads AVGKSS. Residues 207 to 265 form an NMP region; the sequence is QLKDVISEAIAKLETIVAPKDIGEGKEEVEEEEEEENVEDAQELLDGIKESMEQNAGQL. Residues 242 to 265, 292 to 295, and Gln-299 contribute to the AMP site; these read ENVEDAQELLDGIKESMEQNAGQL and GFPK. Residues 347–357 are LID; it reads NLPERIVAGTH. Arg-365 contacts AMP. Gly-397 is a binding site for ATP. A coiled-coil region spans residues 419-487; sequence RNYGLTDEEK…EERELLEAQS (69 aa). The tract at residues 489 to 533 is DPY-30; sequence PLRNYLMTYVMPTLIQGLNECCNVRPEDPVDFLAEYLFKNNPEAQ.

In the central section; belongs to the adenylate kinase family. It in the C-terminal section; belongs to the dpy-30 family.

It is found in the cytoplasm. It localises to the cytosol. The protein localises to the cell projection. The protein resides in the cilium. Its subcellular location is the flagellum. The catalysed reaction is AMP + ATP = 2 ADP. It catalyses the reaction a 2'-deoxyribonucleoside 5'-diphosphate + ATP = a 2'-deoxyribonucleoside 5'-triphosphate + ADP. It carries out the reaction a ribonucleoside 5'-diphosphate + ATP = a ribonucleoside 5'-triphosphate + ADP. Functionally, nucleoside monophosphate (NMP) kinase that catalyzes the reversible transfer of the terminal phosphate group between nucleoside triphosphates and monophosphates. Has highest activity toward AMP, and weaker activity toward dAMP, CMP and dCMP. Also displays broad nucleoside diphosphate kinase activity. Involved in maintaining ciliary structure and function. In Macaca fascicularis (Crab-eating macaque), this protein is Adenylate kinase 7 (AK7).